The following is a 195-amino-acid chain: uncharacterized protein (195 aa).

Residues 1–21 form the signal peptide; it reads MHFSSCVLVSALAIVTNVATA. Asn-62 and Asn-109 each carry an N-linked (GlcNAc...) asparagine glycan. The disordered stretch occupies residues 119 to 141; sequence DWDEDTVTGENAPDSGEPFSTSH.

Its subcellular location is the secreted. This is an uncharacterized protein from Arthroderma benhamiae (strain ATCC MYA-4681 / CBS 112371) (Trichophyton mentagrophytes).